Consider the following 515-residue polypeptide: Cytidine and dCMP deaminase domain-containing protein 1 (515 aa).

Composition is skewed to polar residues over residues 1 to 11 (MKEAGQMQNLE) and 18 to 27 (SVSTQTGSMT). 2 disordered regions span residues 1–27 (MKEA…GSMT) and 56–83 (RQKS…STDK). Residues 60 to 83 (QKNEEGKHGPLGDNEEMTRVSTDK) are compositionally biased toward basic and acidic residues. The CMP/dCMP-type deaminase 1 domain maps to 71–169 (GDNEEMTRVS…SLLTEASSSE (99 aa)). Residues H110, C135, and C138 each contribute to the Zn(2+) site. Positions 272–284 (NLRQNMKDLILLL) match the Nuclear export signal motif. Positions 318–483 (EIARHCMVQA…LNPSEAYGLE (166 aa)) constitute a CMP/dCMP-type deaminase 2 domain. H399 lines the Zn(2+) pocket. Catalysis depends on E401, which acts as the Proton donor. Residues C427 and C430 each coordinate Zn(2+). The disordered stretch occupies residues 481–515 (GLEQNEPERRENGVLRPVPQKEEQHQDKKLRLGIH). The span at 486-515 (EPERRENGVLRPVPQKEEQHQDKKLRLGIH) shows a compositional bias: basic and acidic residues. The Bipartite nuclear localization signal signature appears at 489–511 (RRENGVLRPVPQKEEQHQDKKLR).

Belongs to the cytidine and deoxycytidylate deaminase family. Requires Zn(2+) as cofactor.

It localises to the cytoplasm. Its subcellular location is the nucleus. It catalyses the reaction 2'-deoxycytidine + H2O + H(+) = 2'-deoxyuridine + NH4(+). It carries out the reaction cytidine + H2O + H(+) = uridine + NH4(+). Functionally, catalyzes the deamination of cytidine and deoxycytidine into uridine and deoxyuridine, respectively. May play an important role in testicular development and spermatogenesis. The chain is Cytidine and dCMP deaminase domain-containing protein 1 (CDADC1) from Macaca fascicularis (Crab-eating macaque).